A 542-amino-acid polypeptide reads, in one-letter code: CTP synthase (542 aa).

The interval 1–265 is amidoligase domain; it reads MTRYIFITGG…DDEVLSVFGI (265 aa). Residue serine 13 participates in CTP binding. Serine 13 contributes to the UTP binding site. Residues 14–19 and aspartate 71 each bind ATP; that span reads SLGKGL. Positions 71 and 139 each coordinate Mg(2+). Residues 146–148, 186–191, and lysine 222 each bind CTP; these read DIE and KTKPTQ. Residues 186 to 191 and lysine 222 each bind UTP; that span reads KTKPTQ. The Glutamine amidotransferase type-1 domain maps to 291–541; sequence TIAIVGKYTG…VEAAVEQSRL (251 aa). Glycine 353 provides a ligand contact to L-glutamine. The Nucleophile; for glutamine hydrolysis role is filled by cysteine 380. L-glutamine-binding positions include 381–384, glutamate 404, and arginine 469; that span reads FGMQ. Catalysis depends on residues histidine 514 and glutamate 516.

The protein belongs to the CTP synthase family. As to quaternary structure, homotetramer.

It catalyses the reaction UTP + L-glutamine + ATP + H2O = CTP + L-glutamate + ADP + phosphate + 2 H(+). The enzyme catalyses L-glutamine + H2O = L-glutamate + NH4(+). It carries out the reaction UTP + NH4(+) + ATP = CTP + ADP + phosphate + 2 H(+). It participates in pyrimidine metabolism; CTP biosynthesis via de novo pathway; CTP from UDP: step 2/2. With respect to regulation, allosterically activated by GTP, when glutamine is the substrate; GTP has no effect on the reaction when ammonia is the substrate. The allosteric effector GTP functions by stabilizing the protein conformation that binds the tetrahedral intermediate(s) formed during glutamine hydrolysis. Inhibited by the product CTP, via allosteric rather than competitive inhibition. In terms of biological role, catalyzes the ATP-dependent amination of UTP to CTP with either L-glutamine or ammonia as the source of nitrogen. Regulates intracellular CTP levels through interactions with the four ribonucleotide triphosphates. In Parvibaculum lavamentivorans (strain DS-1 / DSM 13023 / NCIMB 13966), this protein is CTP synthase.